Consider the following 1208-residue polypeptide: Lysine-specific demethylase JMJ17 (1208 aa).

Residues 1 to 36 form a PHD-type 1; degenerate zinc finger; sequence MLLCDSCNKGWHIYCLSPPLKHIPLGNWYCLECLNT. Zn(2+)-binding residues include Cys-4, Cys-7, Cys-30, and Cys-33. The JmjC domain occupies 126–292; that stretch reads EYCGSPWNLN…YGGSGAELYR (167 aa). Fe cation-binding residues include His-172, Glu-174, and His-260. 8 residues coordinate Zn(2+): Cys-369, Cys-372, Cys-383, Cys-385, Cys-392, His-395, Cys-400, and Cys-402. Residues 369–421 form a C5HC2 zinc finger; sequence CIICQQFLHLSAIVCNCRPSVFACLEHWKHLCECEPTKLRLEYRYTLAELDMM. Residues 613–620 carry the Nuclear localization signal motif; it reads SKKISSAK. The PHD-type 2 zinc finger occupies 1099–1145; the sequence is MLHCICLKPYNSRSMVSCSQCGEWYHTYCLKLHWRPKAYVCSACCPL. Positions 1102, 1104, 1116, 1119, 1124, 1127, 1139, and 1142 each coordinate Zn(2+).

Belongs to the JARID1 histone demethylase family. Fe(2+) is required as a cofactor. Expressed in inflorescences, roots, seedlings and siliques, and, at low levels, in leaves and stems.

It localises to the nucleus. The enzyme catalyses N(6),N(6),N(6)-trimethyl-L-lysyl(4)-[histone H3] + 2-oxoglutarate + O2 = N(6),N(6)-dimethyl-L-lysyl(4)-[histone H3] + formaldehyde + succinate + CO2. It carries out the reaction N(6),N(6)-dimethyl-L-lysyl(4)-[histone H3] + 2-oxoglutarate + O2 = N(6)-methyl-L-lysyl(4)-[histone H3] + formaldehyde + succinate + CO2. It catalyses the reaction N(6)-methyl-L-lysyl(4)-[histone H3] + 2-oxoglutarate + O2 = L-lysyl(4)-[histone H3] + formaldehyde + succinate + CO2. The catalysed reaction is N(6),N(6),N(6)-trimethyl-L-lysyl(4)-[histone H3] + 3 2-oxoglutarate + 3 O2 = L-lysyl(4)-[histone H3] + 3 formaldehyde + 3 succinate + 3 CO2. Functions as a histone H3 'Lys-4' (H3K4me) demethylase involved in the regulation of gene expression. Active on H3K4me1, H3K4me2 and H3K4me3. Repressor of the abscisic acid (ABA) signaling pathway, especially during stomatal closure regulation. Negative regulator of responses to dehydration stress by binding directly to the chromatin of SRK2E/OST1 and demethylating H3K4me3 to regulates its expression. Together with JMJ14 and JMJ16, required for plant growth and development. The sequence is that of Lysine-specific demethylase JMJ17 from Arabidopsis thaliana (Mouse-ear cress).